Consider the following 159-residue polypeptide: Cell number regulator 4 (159 aa).

Residues Leu52 to Tyr74 traverse the membrane as a helical segment.

The protein belongs to the cornifelin family. Expressed in roots, coleoptiles, leaves, stalks, apical meristems, immature ears, endosperm, pericarp and tassel spikelets.

It is found in the membrane. The sequence is that of Cell number regulator 4 (CNR4) from Zea mays (Maize).